A 526-amino-acid chain; its full sequence is ATP synthase subunit alpha (526 aa).

Residue 171-178 (GDRQTGKT) participates in ATP binding.

This sequence belongs to the ATPase alpha/beta chains family. In terms of assembly, F-type ATPases have 2 components, CF(1) - the catalytic core - and CF(0) - the membrane proton channel. CF(1) has five subunits: alpha(3), beta(3), gamma(1), delta(1), epsilon(1). CF(0) has four main subunits: a, b, b' and c.

It is found in the cell inner membrane. It catalyses the reaction ATP + H2O + 4 H(+)(in) = ADP + phosphate + 5 H(+)(out). Produces ATP from ADP in the presence of a proton gradient across the membrane. The alpha chain is a regulatory subunit. This chain is ATP synthase subunit alpha, found in Chlorobium phaeobacteroides (strain BS1).